The following is a 1499-amino-acid chain: Condensin complex subunit 1 (1499 aa).

Disordered regions lie at residues 1 to 43 and 1421 to 1499; these read MPRK…DGLS and ITKN…MLDD. Residues 1432-1446 show a composition bias toward low complexity; that stretch reads PTTMSGSSRTTSRAA. 2 stretches are compositionally biased toward acidic residues: residues 1458 to 1467 and 1486 to 1499; these read SDEDDSDSDD and ADDD…MLDD.

It belongs to the CND1 (condensin subunit 1) family. As to quaternary structure, component of the condensin I complex, which contains the mix-1/SMC2 and smc-4/SMC4 heterodimer, and three non SMC subunits that probably regulate the complex: dpy-26, capg-1 and dpy-28. Within the complex, interacts with dpy-26 and smc-4. Component of the dosage compensation complex, which consist of the condensin I like components mix-1/SMC2 and dpy-27/SMC4, and the three non SMC subunits dpy-26, capg-1 and dpy-28. Within the complex, interacts with mix-1, dpy-27, dpy-26 and capg-1. Interacts with smcl-1. In terms of processing, sumoylated. Sumoylated in the context of the dosage compensation complex but not in the condensin I complex. Sumoylation is important for assembly of the dosage compensation complex and its robust binding to the X chromosome. As to expression, expressed in somatic and germline tissues (at protein level).

The protein resides in the nucleus. It localises to the chromosome. Its function is as follows. Required for both chromosome condensation and segregation during mitosis and meiosis and X-chromosome dosage compensation depending on its binding partners. Regulatory subunit of the condensin I complex, a complex required for conversion of interphase chromatin into mitotic-like condense chromosomes. The condensin I complex probably introduces positive supercoils into relaxed DNA in the presence of type I topoisomerases and converts nicked DNA into positive knotted forms in the presence of type II topoisomerases. The condensin I complex function is required for proper chromosome segregation in mitosis and meiosis. As a member of the condensin I complex, further controls the crossover number and distribution in meiosis by restricting double strand break formation, possibly by influencing higher-order chromosome structure. Plays a role in robust cytokinesis upon presence of chromatin obstructions. Also a member of the condensin I-like dosage compensation complex that associates specifically with hermaphrodite X chromosomes to reduce their gene transcription during interphase, possibly through chromatin reorganization. In Caenorhabditis elegans, this protein is Condensin complex subunit 1.